The primary structure comprises 294 residues: Probable endonuclease 4 (294 aa).

Positions 78, 118, 155, 189, 192, 226, 239, 241, and 271 each coordinate Zn(2+).

The protein belongs to the AP endonuclease 2 family. It depends on Zn(2+) as a cofactor.

The enzyme catalyses Endonucleolytic cleavage to 5'-phosphooligonucleotide end-products.. In terms of biological role, endonuclease IV plays a role in DNA repair. It cleaves phosphodiester bonds at apurinic or apyrimidinic (AP) sites, generating a 3'-hydroxyl group and a 5'-terminal sugar phosphate. This Oleidesulfovibrio alaskensis (strain ATCC BAA-1058 / DSM 17464 / G20) (Desulfovibrio alaskensis) protein is Probable endonuclease 4.